A 94-amino-acid polypeptide reads, in one-letter code: Large ribosomal subunit protein bL28 (94 aa).

It belongs to the bacterial ribosomal protein bL28 family.

The protein is Large ribosomal subunit protein bL28 of Hyphomonas neptunium (strain ATCC 15444).